The primary structure comprises 394 residues: Phosphoglycerate kinase (394 aa).

Residues 21–23 (DFN), Arg36, 59–62 (HLGR), Arg118, and Arg151 each bind substrate. Ser183 carries the phosphoserine modification. ATP-binding residues include Lys201 and Gly292. A Phosphothreonine modification is found at Thr299. ATP contacts are provided by residues Glu323 and 350-353 (GGDS).

The protein belongs to the phosphoglycerate kinase family. As to quaternary structure, monomer.

The protein localises to the cytoplasm. It carries out the reaction (2R)-3-phosphoglycerate + ATP = (2R)-3-phospho-glyceroyl phosphate + ADP. It functions in the pathway carbohydrate degradation; glycolysis; pyruvate from D-glyceraldehyde 3-phosphate: step 2/5. The chain is Phosphoglycerate kinase from Bacillus mycoides (strain KBAB4) (Bacillus weihenstephanensis).